The primary structure comprises 351 residues: MTVTMTLGQLAEALGATLKGPEALQITGLATLQEAGSGQLSFLANKQYRKFLESSQASAVLLKAEDAEGFAGNALIVADPYLAYARISHLFDPKPKAVAGIHPSAVVAEDAQVDTSASIGPFAVIESGARIGADVTIGAHCFIGARCVVGEGGWLAPRVTLYHDVIIGKRVVIQSGAVIGGEGFGFANEKGIWRKIAQIGGVTLGDDVEIGVNTAVDRGALSDTRIGDGVKLDNQIQIAHNVQVGDHTAMAACVGISGSTRIGKHCMIAGGVGMVGHIDVCDNVFVSGMTMVTRSITEPGGYSSGTAMQPLAEWRKSAARIRQLDEMSKRLQQLEKRVDTVTSGGQPTSEG.

Histidine 240 (proton acceptor) is an active-site residue.

It belongs to the transferase hexapeptide repeat family. LpxD subfamily. As to quaternary structure, homotrimer.

It catalyses the reaction a UDP-3-O-[(3R)-3-hydroxyacyl]-alpha-D-glucosamine + a (3R)-hydroxyacyl-[ACP] = a UDP-2-N,3-O-bis[(3R)-3-hydroxyacyl]-alpha-D-glucosamine + holo-[ACP] + H(+). Its pathway is bacterial outer membrane biogenesis; LPS lipid A biosynthesis. Catalyzes the N-acylation of UDP-3-O-acylglucosamine using 3-hydroxyacyl-ACP as the acyl donor. Is involved in the biosynthesis of lipid A, a phosphorylated glycolipid that anchors the lipopolysaccharide to the outer membrane of the cell. The polypeptide is UDP-3-O-acylglucosamine N-acyltransferase (Pseudomonas entomophila (strain L48)).